Reading from the N-terminus, the 900-residue chain is Translation initiation factor IF-2 (900 aa).

Composition is skewed to basic and acidic residues over residues 119-158, 165-191, and 198-229; these read AAKAEAEAKAKADAEAKQKADAEAKAKAEKAAKAKSEKQE, ADEKAAKDEADKLQAAKDEVAKAKADA, and EEARRLAEENAKRWADEEKARKEAEKTGDHHV. A disordered region spans residues 119-306; it reads AAKAEAEAKA…NARSVAPESM (188 aa). Residues 257-272 show a composition bias toward low complexity; the sequence is SANAGNNANSNSNAGS. The tr-type G domain maps to 400–569; it reads PRAPVVTIMG…LLESEVLELK (170 aa). The tract at residues 409-416 is G1; that stretch reads GHVDHGKT. Position 409–416 (409–416) interacts with GTP; sequence GHVDHGKT. The G2 stretch occupies residues 434–438; it reads GITQH. A G3 region spans residues 455 to 458; sequence DTPG. Residues 455–459 and 509–512 each bind GTP; these read DTPGH and NKID. Residues 509–512 form a G4 region; that stretch reads NKID. The interval 545 to 547 is G5; the sequence is SAK.

This sequence belongs to the TRAFAC class translation factor GTPase superfamily. Classic translation factor GTPase family. IF-2 subfamily.

It localises to the cytoplasm. Functionally, one of the essential components for the initiation of protein synthesis. Protects formylmethionyl-tRNA from spontaneous hydrolysis and promotes its binding to the 30S ribosomal subunits. Also involved in the hydrolysis of GTP during the formation of the 70S ribosomal complex. This chain is Translation initiation factor IF-2, found in Shewanella piezotolerans (strain WP3 / JCM 13877).